Reading from the N-terminus, the 383-residue chain is Presenilin-associated rhomboid-like protein A, mitochondrial (383 aa).

The N-terminal 37 residues, 1-37, are a transit peptide targeting the mitochondrion; the sequence is MAWRSCFMKWTQINSINASSLCPKSTRLNIHPQQRCG. The tract at residues 35–75 is disordered; it reads RCGFRKTERPSESKKGVQETEAEAGGHNRAVPPKPVPPLPP. At 38-83 the chain is on the mitochondrial matrix side; that stretch reads FRKTERPSESKKGVQETEAEAGGHNRAVPPKPVPPLPPRRPHQLFR. The segment covering 39–52 has biased composition (basic and acidic residues); the sequence is RKTERPSESKKGVQ. The span at 66–75 shows a compositional bias: pro residues; it reads PPKPVPPLPP. The helical transmembrane segment at 84–104 threads the bilayer; sequence PLVFTVGFTGCSFGAAAILQY. The Mitochondrial intermembrane portion of the chain corresponds to 105–168; it reads ESVKSRVQLA…FWSGLSEGQK (64 aa). A helical transmembrane segment spans residues 169 to 189; that stretch reads TVTGIIALNTVVLCCWRVPAM. Residues 190-219 lie on the Mitochondrial matrix side of the membrane; that stretch reads QRFLVKYFTSNPASKTRCLPMVLSSFSHYS. Residues 220–240 traverse the membrane as a helical segment; sequence VIHMVVNMYVLWTFSSSIVSL. Over 241–245 the chain is Mitochondrial intermembrane; that stretch reads LGREQ. A helical transmembrane segment spans residues 246–266; sequence FLALYLSGGVISTFVSYVFKT. Topologically, residues 267 to 271 are mitochondrial matrix; the sequence is ATGRL. Residues 272–292 form a helical membrane-spanning segment; that stretch reads GPSLGASGSIMTVLAAVCTKI. The active-site Nucleophile is Ser-278. The Mitochondrial intermembrane portion of the chain corresponds to 293 to 298; sequence PEAKLG. Residues 299–319 form a helical membrane-spanning segment; the sequence is IVLLPVISFSAGNALKALVAL. At 320 to 334 the chain is on the mitochondrial matrix side; sequence DIAGLVLGWRFFDHA. Residues 335-355 traverse the membrane as a helical segment; it reads AHLGGALFGVWYIGYGHELIW. Residue His-336 is part of the active site. The Mitochondrial intermembrane segment spans residues 356–383; it reads RKREPLIKFWHELRNMSPGRPGPGGGGG.

The protein belongs to the peptidase S54 family.

The protein localises to the mitochondrion inner membrane. The catalysed reaction is Cleaves type-1 transmembrane domains using a catalytic dyad composed of serine and histidine that are contributed by different transmembrane domains.. Functionally, required for the control of apoptosis during postnatal growth. Essential for proteolytic processing of an antiapoptotic form of opa1 which prevents the release of mitochondrial cytochrome c in response to intrinsic apoptotic signals. This chain is Presenilin-associated rhomboid-like protein A, mitochondrial (parla), found in Danio rerio (Zebrafish).